Reading from the N-terminus, the 223-residue chain is 3,4-dihydroxy-2-butanone 4-phosphate synthase (223 aa).

D-ribulose 5-phosphate contacts are provided by residues 47 to 48 (RE), Asp52, 160 to 164 (RRGHT), and Glu184. Residue Glu48 participates in Mg(2+) binding. Position 163 (His163) interacts with Mg(2+).

This sequence belongs to the DHBP synthase family. In terms of assembly, homodimer. Mg(2+) serves as cofactor. It depends on Mn(2+) as a cofactor.

The catalysed reaction is D-ribulose 5-phosphate = (2S)-2-hydroxy-3-oxobutyl phosphate + formate + H(+). It functions in the pathway cofactor biosynthesis; riboflavin biosynthesis; 2-hydroxy-3-oxobutyl phosphate from D-ribulose 5-phosphate: step 1/1. Functionally, catalyzes the conversion of D-ribulose 5-phosphate to formate and 3,4-dihydroxy-2-butanone 4-phosphate. The polypeptide is 3,4-dihydroxy-2-butanone 4-phosphate synthase (Cupriavidus pinatubonensis (strain JMP 134 / LMG 1197) (Cupriavidus necator (strain JMP 134))).